A 195-amino-acid polypeptide reads, in one-letter code: MKLLCGFFLLWLGLVGNLAQSDPSPKEEESYSDWGLRQLRGSFESVNSYVDSFMELLGGKNGVCQYRCRYGKAPMPRPGYKAQEPNGCSSYFLGIKVPGSMDLGIPAMTKCCNQLDVCYDTCGANKYRCDAKFRWCLHSICSDLKRTLGFVSNVEAACDSLADTVFNTVWTLGCRPFMNSQRAACICAEEEKEEL.

The N-terminal stretch at 1 to 19 (MKLLCGFFLLWLGLVGNLA) is a signal peptide. 4 residues coordinate Ca(2+): Ser-89, Tyr-91, Leu-93, and Asp-116.

It belongs to the phospholipase A2 family. The cofactor is Ca(2+).

It localises to the secreted. Its function is as follows. Not known; does not seem to have catalytic activity. The polypeptide is Group XIIB secretory phospholipase A2-like protein (Pla2g12b) (Mus musculus (Mouse)).